We begin with the raw amino-acid sequence, 138 residues long: Small ribosomal subunit protein uS11c (138 aa).

Positions 1 to 21 are disordered; sequence MTKAIQKIGSRRNGRIASRKN. Positions 9 to 21 are enriched in basic residues; it reads GSRRNGRIASRKN.

Belongs to the universal ribosomal protein uS11 family. As to quaternary structure, part of the 30S ribosomal subunit.

Its subcellular location is the plastid. It is found in the chloroplast. This chain is Small ribosomal subunit protein uS11c, found in Ceratophyllum demersum (Rigid hornwort).